Consider the following 317-residue polypeptide: Beta-ketoacyl-[acyl-carrier-protein] synthase III (317 aa).

Residues Cys112 and His244 contribute to the active site. Positions 245–249 (QANLR) are ACP-binding. Residue Asn274 is part of the active site.

Belongs to the thiolase-like superfamily. FabH family. Homodimer.

It is found in the cytoplasm. The enzyme catalyses malonyl-[ACP] + acetyl-CoA + H(+) = 3-oxobutanoyl-[ACP] + CO2 + CoA. It participates in lipid metabolism; fatty acid biosynthesis. Functionally, catalyzes the condensation reaction of fatty acid synthesis by the addition to an acyl acceptor of two carbons from malonyl-ACP. Catalyzes the first condensation reaction which initiates fatty acid synthesis and may therefore play a role in governing the total rate of fatty acid production. Possesses both acetoacetyl-ACP synthase and acetyl transacylase activities. Its substrate specificity determines the biosynthesis of branched-chain and/or straight-chain of fatty acids. The sequence is that of Beta-ketoacyl-[acyl-carrier-protein] synthase III from Salmonella arizonae (strain ATCC BAA-731 / CDC346-86 / RSK2980).